Here is a 1960-residue protein sequence, read N- to C-terminus: Nuclear pore complex protein Nup98-Nup96 (1960 aa).

46 repeat units span residues 2-3 (FG), 9-10 (FG), 18-19 (FG), 30-31 (FG), 35-36 (FG), 43-44 (FG), 59-60 (FG), 73-74 (FG), 81-82 (FG), 92-93 (FG), 105-106 (FG), 117-118 (FG), 125-126 (FG), 135-136 (FG), 148-149 (FG), 160-161 (FG), 163-164 (FG), 174-175 (FG), 264-265 (FG), 266-267 (FG), 282-283 (FG), 293-294 (FG), 304-305 (FG), 309-310 (FG), 319-320 (FG), 333-334 (FG), 352-353 (FG), 358-359 (FG), 365-366 (FG), 377-378 (FG), 384-385 (FG), 387-388 (FG), 400-401 (FG), 413-414 (FG), 426-427 (FG), 428-429 (FG), 441-442 (FG), 454-455 (FG), 467-468 (FG), 493-494 (FG), 496-497 (FG), 516-517 (FG), 527-528 (FG), 546-547 (FG), 553-554 (FG), and 565-566 (FG). Residues 2 to 566 (FGGAKPSFGA…GGSLGGGGFG (565 aa)) are 46 X 2 AA repeats of F-G. Disordered regions lie at residues 698-768 (KSVE…WLHP) and 781-860 (TGMD…AANQ). Positions 704–718 (NPSSSIGSAPNTPQS) are enriched in polar residues. Over residues 755-768 (ESQDNGRRESWLHP) the composition is skewed to basic and acidic residues. Composition is skewed to polar residues over residues 781 to 794 (TGMD…STLN) and 806 to 850 (RPSS…SNRS). Residues 886–1028 (RVGYYTIPSL…GSWVFRVKHF (143 aa)) enclose the Peptidase S59 domain. The active-site Nucleophile is the Ser1029.

This sequence belongs to the nucleoporin GLFG family. Part of the nuclear pore complex (NPC). Interacts with Rae1. Nuclear pore complex protein Nup98: Interacts with pzg and Chro. Interacts with MBD-R2; the interaction allows Nup98 recruitment to chromatin. Interacts with Trx. Interacts with Wds. Interacts with Mgtor and Cp190. Upon ecdysone stimulation, interacts with EcR, CTCF, su(Hw) and Trl. In terms of processing, isoform A and isoform C are autoproteolytically cleaved to yield Nup98 and Nup96 or Nup98 only, respectively. In terms of tissue distribution, expressed in brain.

Its subcellular location is the chromosome. It localises to the nucleus. It is found in the nucleoplasm. The protein resides in the nucleus membrane. The protein localises to the nuclear pore complex. Functionally, part of the nuclear pore complex (NPC). Required for MAD import as part of the Nup107-160 complex and required for nuclear export of Moe probably via its association with Rae1. Plays a role in nuclear mRNA export. Promotes cell antiviral response by up-regulating FoxK-dependent antiviral gene transcription. In germline stem cells, involved in their maintenance and division together with the TGF-Beta and EGFR signaling pathways. In larval lymph glands, has a role in the maintenance of hematopoiesis by regulating Pvr expression. Its function is as follows. Part of the nuclear pore complex (NPC). In the nucleoplasm, binds to transcriptionally active chromatin with a preference for regulatory regions; co-localizes with RNA polymerase II in a RNA-independent manner and before transition into transcription elongation. Plays a role in the transcriptional memory process by stabilizing enhancer-promoter loops and by mediating anchoring of chromatin to the nuclear pore complex region. During larval development, interacts with trx and MBD-R2 and regulates transcription of developmental genes including ecdysone-responsive genes such as Eip74 and E23. In terms of biological role, part of the nuclear pore complex (NPC). In Drosophila melanogaster (Fruit fly), this protein is Nuclear pore complex protein Nup98-Nup96.